The chain runs to 66 residues: Toxin BomPI (66 aa).

The region spanning 2–64 is the LCN-type CS-alpha/beta domain; sequence RDAYIAQPEN…VPIRIEGKCH (63 aa). Disulfide bonds link cysteine 12-cysteine 63, cysteine 16-cysteine 36, cysteine 22-cysteine 46, and cysteine 26-cysteine 48.

It belongs to the long (4 C-C) scorpion toxin superfamily. Sodium channel inhibitor family. Alpha subfamily. Expressed by the venom gland.

It localises to the secreted. Alpha toxins bind voltage-independently at site-3 of sodium channels (Nav) and inhibit the inactivation of the activated channels, thereby blocking neuronal transmission. The polypeptide is Toxin BomPI (Buthus occitanus mardochei (Moroccan scorpion)).